Here is a 368-residue protein sequence, read N- to C-terminus: Core histone macro-H2A.1 (368 aa).

The region spanning Ser2–Lys117 is the Histone H2A domain. Lys7 and Lys9 each carry N6-lactoyllysine; alternate. Lys18 is modified (N6-methyllysine). Lys116 carries the N6-acetyllysine; alternate modification. A Glycyl lysine isopeptide (Lys-Gly) (interchain with G-Cter in ubiquitin); alternate cross-link involves residue Lys116. Lys117 participates in a covalent cross-link: Glycyl lysine isopeptide (Lys-Gly) (interchain with G-Cter in ubiquitin). Lys123 carries the N6-acetyllysine; alternate modification. Lys123 bears the N6,N6-dimethyllysine; alternate mark. Lys123 is covalently cross-linked (Glycyl lysine isopeptide (Lys-Gly) (interchain with G-Cter in SUMO2); alternate). The segment at Ile128–Thr179 is disordered. Thr129 is modified (phosphothreonine). The span at Pro144–Lys159 shows a compositional bias: basic residues. Lys166 is covalently cross-linked (Glycyl lysine isopeptide (Lys-Gly) (interchain with G-Cter in SUMO2)). Residues Ser169 and Ser172 each carry the phosphoserine modification. Positions Thr183–Asp366 constitute a Macro domain. Lys188 participates in a covalent cross-link: Glycyl lysine isopeptide (Lys-Gly) (interchain with G-Cter in SUMO2). Residues Asp202, Ile203, Val225, Ser274, Gly311, Ser312, Gly313, and Asn315 each contribute to the a glycoprotein site. Residue Lys319 forms a Glycyl lysine isopeptide (Lys-Gly) (interchain with G-Cter in SUMO2) linkage.

This sequence belongs to the histone H2A family. The nucleosome is a histone octamer containing two molecules each of H2A, H2B, H3 and H4 assembled in one H3-H4 heterotetramer and two H2A-H2B heterodimers. Interacts with HDAC1 and HDAC2. Interacts with SPOP. Part of a complex consisting of MACROH2A1, CUL3 and SPOP. In terms of assembly, interacts with PARP1. Post-translationally, monoubiquitinated at either Lys-116 or Lys-117. May also be polyubiquitinated. Ubiquitination is mediated by the CUL3/SPOP E3 complex and does not promote proteasomal degradation. Instead, it is required for enrichment in inactive X chromosome chromatin. As to expression, present only in liver and brain (at protein level). Present in brain, thymus, testis, liver and kidney (at protein level).

Its subcellular location is the nucleus. The protein localises to the chromosome. Variant histone H2A which replaces conventional H2A in a subset of nucleosomes where it represses transcription. Nucleosomes wrap and compact DNA into chromatin, limiting DNA accessibility to the cellular machineries which require DNA as a template. Histones thereby play a central role in transcription regulation, DNA repair, DNA replication and chromosomal stability. DNA accessibility is regulated via a complex set of post-translational modifications of histones, also called histone code, and nucleosome remodeling. Involved in stable X chromosome inactivation. Inhibits the binding of transcription factors, including NF-kappa-B, and interferes with the activity of remodeling SWI/SNF complexes. Inhibits histone acetylation by EP300 and recruits class I HDACs, which induces a hypoacetylated state of chromatin. Its function is as follows. Isoform that specifically binds poly-ADP-ribose and O-acetyl-ADP-ribose and plays a key role in NAD(+) metabolism. Able to bind to the ends of poly-ADP-ribose chains created by PARP1 and cap them. This prevents PARP1 from further addition of ADP-ribose and thus limits the consumption of nuclear NAD(+), allowing the cell to maintain proper NAD(+) levels in both the nucleus and the mitochondria to promote proper mitochondrial respiration. Increases the expression of genes involved in redox metabolism, including SOD3. Functionally, in contrast to isoform 1, does not bind poly-ADP-ribose. Represses SOD3 gene expression. The polypeptide is Core histone macro-H2A.1 (Rattus norvegicus (Rat)).